A 156-amino-acid chain; its full sequence is UPF0251 protein Sfum_2819 (156 aa).

This sequence belongs to the UPF0251 family.

The chain is UPF0251 protein Sfum_2819 from Syntrophobacter fumaroxidans (strain DSM 10017 / MPOB).